Here is an 895-residue protein sequence, read N- to C-terminus: Probable aminodeoxychorismate synthase, chloroplastic (895 aa).

The segment at Met1–Pro45 is disordered. Residues Met1–Val48 constitute a chloroplast transit peptide. The segment covering Gly32 to Ala42 has biased composition (gly residues). A Glutamine amidotransferase type-1 domain is found at Arg49–Gln307. Cys135 serves as the catalytic Nucleophile. Active-site residues include His281 and Glu283. Residues Ile387–Glu875 form a PABB component region.

It in the C-terminal section; belongs to the anthranilate synthase component I family.

The protein localises to the plastid. The protein resides in the chloroplast. The enzyme catalyses chorismate + L-glutamine = 4-amino-4-deoxychorismate + L-glutamate. Its pathway is cofactor biosynthesis; tetrahydrofolate biosynthesis; 4-aminobenzoate from chorismate: step 1/2. It functions in the pathway antibiotic biosynthesis; candicidin biosynthesis. Bifunctional enzyme that catalyzes the biosynthesis of 4-amino-4-deoxychorismate (ADC) from chorismate and glutamine. In the first step, a glutamine amidotransferase generates ammonia that is channelled between the binding sites of glutamine and chorismate and used along with chorismate in the second step, catalyzed by aminodeoxychorismate synthase, to produce ADC. Required for the synthesis of 4-aminobenzoate (PABA), an important component in tetrahydrofolate biosynthesis. Does not possess ADC lyase activity. The sequence is that of Probable aminodeoxychorismate synthase, chloroplastic (ADCS) from Oryza sativa subsp. japonica (Rice).